The chain runs to 55 residues: Large ribosomal subunit protein bL33 (55 aa).

The protein belongs to the bacterial ribosomal protein bL33 family.

This chain is Large ribosomal subunit protein bL33, found in Alcanivorax borkumensis (strain ATCC 700651 / DSM 11573 / NCIMB 13689 / SK2).